Here is a 246-residue protein sequence, read N- to C-terminus: Large ribosomal subunit protein uL2 (246 aa).

The disordered stretch occupies residues 197 to 226 (SPYAHPHGGGSHPKGGTPVPKTAPPGQKVG).

This sequence belongs to the universal ribosomal protein uL2 family. As to quaternary structure, part of the 50S ribosomal subunit. Forms a bridge to the 30S subunit in the 70S ribosome.

Functionally, one of the primary rRNA binding proteins. Required for association of the 30S and 50S subunits to form the 70S ribosome, for tRNA binding and peptide bond formation. It has been suggested to have peptidyltransferase activity; this is somewhat controversial. Makes several contacts with the 16S rRNA in the 70S ribosome. This is Large ribosomal subunit protein uL2 from Pyrobaculum islandicum (strain DSM 4184 / JCM 9189 / GEO3).